A 451-amino-acid polypeptide reads, in one-letter code: UPF0210 protein LMHCC_2097 (451 aa).

This sequence belongs to the UPF0210 family. Homodimer.

The protein is UPF0210 protein LMHCC_2097 of Listeria monocytogenes serotype 4a (strain HCC23).